The following is a 186-amino-acid chain: MKIAQELRVGNVFMMNGAPMVVQKAEYNKSGRNAAVVKMKYKNLLTEAPGESVFKADDKFEVVVLERRECTYSYFADPMYVFMDADYNQFEVEQDSMGDALNYLEDGMAVEVVFYNEKAISVEMPTTLVREIVYTEPAVKGDTSSGKVLKGAKINTGFELQVPLFCNIGDKIEIDTRTGEYRSRAN.

Belongs to the elongation factor P family.

The protein localises to the cytoplasm. The protein operates within protein biosynthesis; polypeptide chain elongation. Its function is as follows. Involved in peptide bond synthesis. Stimulates efficient translation and peptide-bond synthesis on native or reconstituted 70S ribosomes in vitro. Probably functions indirectly by altering the affinity of the ribosome for aminoacyl-tRNA, thus increasing their reactivity as acceptors for peptidyl transferase. This is Elongation factor P from Cupriavidus pinatubonensis (strain JMP 134 / LMG 1197) (Cupriavidus necator (strain JMP 134)).